The sequence spans 561 residues: MACPF domain-containing protein CAD1 (561 aa).

The 304-residue stretch at 11 to 314 (VPSSEALTTT…PPIEDLQYFL (304 aa)) folds into the MACPF domain. The segment at 489–514 (VASSGRLEPGGPSTSSSTEEVSGQSG) is disordered. Residues 500–513 (PSTSSSTEEVSGQS) are compositionally biased toward polar residues.

It belongs to the complement C6/C7/C8/C9 (TC 1.C.39) family. As to expression, mainly expressed in the vascular system.

In terms of biological role, negatively controls the salicylic acid (SA)-mediated pathway of programmed cell death in plant immunity. This Arabidopsis thaliana (Mouse-ear cress) protein is MACPF domain-containing protein CAD1 (CAD1).